A 448-amino-acid polypeptide reads, in one-letter code: Asparagine--tRNA ligase (448 aa).

The protein belongs to the class-II aminoacyl-tRNA synthetase family. Homodimer.

The protein resides in the cytoplasm. The enzyme catalyses tRNA(Asn) + L-asparagine + ATP = L-asparaginyl-tRNA(Asn) + AMP + diphosphate + H(+). The polypeptide is Asparagine--tRNA ligase (Streptococcus pyogenes serotype M4 (strain MGAS10750)).